The following is a 319-amino-acid chain: uncharacterized protein (319 aa).

A run of 9 helical transmembrane segments spans residues 11 to 31, 43 to 63, 83 to 103, 108 to 128, 134 to 154, 195 to 215, 220 to 240, 260 to 280, and 284 to 304; these read GLWAGFIAFVIAMLALDLGVF, ALGWSALWVSLALVFGAGVWW, LSVDNIFVFVVIFSALRIPAL, VLFWGILSALALRAIMIFAGV, FHWLIYVFGGFLIITGVKLFL, LATPLLMALLLVEASDILFAL, AIFAVTTDPFIVFTSNIFAIL, KVGLSAVLVFVGTKMAIIDFV, and PEVSLSVIAGLLGASIVASLI.

It belongs to the TerC family.

The protein resides in the cell membrane. This is an uncharacterized protein from Myxococcus xanthus.